Consider the following 409-residue polypeptide: Tyrosine--tRNA ligase (409 aa).

Tyrosine 39 lines the L-tyrosine pocket. Positions 44–53 (PTAPSLHVGS) match the 'HIGH' region motif. L-tyrosine contacts are provided by tyrosine 176 and glutamine 180. Positions 236-240 (KMGKT) match the 'KMSKS' region motif. Lysine 239 lines the ATP pocket. Residues 346–409 (IGIVDALVGL…KKKHGILRKA (64 aa)) enclose the S4 RNA-binding domain.

It belongs to the class-I aminoacyl-tRNA synthetase family. TyrS type 1 subfamily. As to quaternary structure, homodimer.

It is found in the cytoplasm. It catalyses the reaction tRNA(Tyr) + L-tyrosine + ATP = L-tyrosyl-tRNA(Tyr) + AMP + diphosphate + H(+). Catalyzes the attachment of tyrosine to tRNA(Tyr) in a two-step reaction: tyrosine is first activated by ATP to form Tyr-AMP and then transferred to the acceptor end of tRNA(Tyr). The protein is Tyrosine--tRNA ligase of Novosphingobium aromaticivorans (strain ATCC 700278 / DSM 12444 / CCUG 56034 / CIP 105152 / NBRC 16084 / F199).